The chain runs to 273 residues: Undecaprenyl-diphosphatase (273 aa).

The next 7 membrane-spanning stretches (helical) occupy residues 48 to 68, 89 to 109, 116 to 136, 152 to 172, 193 to 213, 222 to 242, and 252 to 272; these read AANTFKVVIQLGSILAAVVVF, LTLLHVIIGLLPAGVLGVLFE, LFSTKTVLIGLVLGALLMIVA, ITYKQAFLVGLVQCLSLWPGF, ADFTFIMAVPIMAGASGLSLL, ADIPFFIAGFLSAFVFALLAI, and IRLVPFAVYRIALAFIIYFLY.

This sequence belongs to the UppP family.

It localises to the cell membrane. It catalyses the reaction di-trans,octa-cis-undecaprenyl diphosphate + H2O = di-trans,octa-cis-undecaprenyl phosphate + phosphate + H(+). Catalyzes the dephosphorylation of undecaprenyl diphosphate (UPP). Confers resistance to bacitracin. The protein is Undecaprenyl-diphosphatase of Geobacillus thermodenitrificans (strain NG80-2).